The sequence spans 978 residues: uncharacterized protein (978 aa).

A signal peptide spans 1–27 (MHSWKKKLVVSQLALACTLAITSQANA). The Autotransporter domain maps to 713-978 (GLADNGGAWV…SANVGVKYTW (266 aa)).

This is an uncharacterized protein from Salmonella typhimurium (strain LT2 / SGSC1412 / ATCC 700720).